The primary structure comprises 825 residues: MGKKRTKGRSAPDTVASESAEPVCRHLRKGLEQGNLKKALVNVEWNICQDCKTDNKVKDKPEEEAEDPSVWLCLKCGHQGCGRDSQEQHALKHYTTPRSEPHYLVLSLDNWSVWCYKCDEEVKYCSSNRLGQVVDYVRKQAGVRTSKPAEKNNGHIELENKKLEKESKNEQEREKSENLAKETIPMDSASQITVKGLSNLGNTCFFNAVMQNLSQTPVLRELLKEVKMSGTIVKIEPPDLALTEPLEVNLEPPGPLTLAMSQFLSEMQENKKRVVTPKELFSQVCKKATRFKGYQQQDSQELLRYLLDGMRAEEHQRVSKGILKAFGNSTEKLDEEVKNKVKDYEKKKAIPSFVDRIFGGELTSTIMCDECRTVSLVHESFLDLSLPVLDDQSGKKSINDKNVKMTMEEEDKDSEEEKDDSYMKSRSDLPSGTSKHLQKKAKKQAKKQAKNQRRQQKIQERFLHFNELCATDYTEDNEREADTALAGEVEVDTDSTHGSQEEATQIELSVNQKDLDGQESMIERTPDVQESPEDLGVKSANTESDLGIVTPAPECPRDFNGAFLEERTSGELDIINGLKNLNLNAAVDPDEINIEIPNDSHSAPKVYEVMNEDPETAFCTLANREAFSTDECSIQHCLYQFTRNEKLQDANKLLCEVCSRRQCNGPKANIKGDRRHVYTNAKKQMLVSLAPPVLTLHLKRFQQAGFNLRKVNKHIKFPEILDLAPFCTLKCKNVAEESTRVLYSLYGVVEHSGTMRSGHYTAYAKERTASCHLSNLVLHGDIPQDCEMESTKGQWFHISDTHVQAVPITKVLNSQAYLLFYERIL.

A disordered region spans residues 1–20 (MGKKRTKGRSAPDTVASESA). A UBP-type zinc finger spans residues 22 to 141 (PVCRHLRKGL…QVVDYVRKQA (120 aa)). Zn(2+)-binding residues include cysteine 24, histidine 26, cysteine 48, cysteine 51, cysteine 73, cysteine 76, cysteine 81, histidine 89, histidine 93, histidine 102, cysteine 115, and cysteine 118. Residue lysine 139 forms a Glycyl lysine isopeptide (Lys-Gly) (interchain with G-Cter in SUMO2) linkage. Residues 164-180 (EKESKNEQEREKSENLA) are compositionally biased toward basic and acidic residues. Residues 164 to 184 (EKESKNEQEREKSENLAKETI) form a disordered region. Phosphoserine is present on serine 188. The USP domain maps to 195 to 824 (KGLSNLGNTC…QAYLLFYERI (630 aa)). The Nucleophile role is filled by cysteine 204. Basic and acidic residues predominate over residues 393–407 (SGKKSINDKNVKMTM). Positions 393-456 (SGKKSINDKN…KQAKNQRRQQ (64 aa)) are disordered. Acidic residues predominate over residues 408 to 419 (EEEDKDSEEEKD). Phosphoserine is present on serine 414. A compositionally biased stretch (basic residues) spans 436–456 (HLQKKAKKQAKKQAKNQRRQQ). Phosphoserine is present on residues serine 520 and serine 531. Catalysis depends on histidine 759, which acts as the Proton acceptor.

Belongs to the peptidase C19 family. USP16 subfamily. As to quaternary structure, homotetramer. Associates with late pre-40S ribosomes. Interacts with CEP78; promoting deubiquitination of tektins. In terms of processing, phosphorylated at the onset of mitosis and dephosphorylated during the metaphase/anaphase transition. Phosphorylation by AURKB enhances the deubiquitinase activity.

Its subcellular location is the nucleus. The protein localises to the cytoplasm. It carries out the reaction Thiol-dependent hydrolysis of ester, thioester, amide, peptide and isopeptide bonds formed by the C-terminal Gly of ubiquitin (a 76-residue protein attached to proteins as an intracellular targeting signal).. Its function is as follows. Specifically deubiquitinates 'Lys-120' of histone H2A (H2AK119Ub), a specific tag for epigenetic transcriptional repression, thereby acting as a coactivator. Deubiquitination of histone H2A is a prerequisite for subsequent phosphorylation at 'Ser-11' of histone H3 (H3S10ph), and is required for chromosome segregation when cells enter into mitosis. In resting B- and T-lymphocytes, phosphorylation by AURKB leads to enhance its activity, thereby maintaining transcription in resting lymphocytes. Regulates Hox gene expression via histone H2A deubiquitination. Prefers nucleosomal substrates. Does not deubiquitinate histone H2B. Also deubiquitinates non-histone proteins, such as ribosomal protein RPS27A: deubiquitination of monoubiquitinated RPS27A promotes maturation of the 40S ribosomal subunit. Also mediates deubiquitination of tektin proteins (TEKT1, TEKT2, TEK3, TEKT4 and TEKT5), promoting their stability. This Mus musculus (Mouse) protein is Ubiquitin carboxyl-terminal hydrolase 16 (Usp16).